The chain runs to 1030 residues: FACT complex subunit spt-16 (1030 aa).

A coiled-coil region spans residues 424–445; that stretch reads RLKSNVIKFKEEQENREAEKDN. Basic and acidic residues-rich tracts occupy residues 435–449 and 464–477; these read EQEN…DQKK and TRNK…RKER. Disordered stretches follow at residues 435 to 477 and 491 to 514; these read EQEN…RKER and ARLS…SYKT. Residues 623–645 adopt a coiled-coil conformation; that stretch reads RLIKEMQKRFKTEEAEEREKEGA. The disordered stretch occupies residues 927-1030; that stretch reads VESDNEEAMD…KSGPSHKRRK (104 aa). 2 stretches are compositionally biased toward acidic residues: residues 929-951 and 958-983; these read SDNE…EEDA and ESDE…DSDE. Residues 987–1007 adopt a coiled-coil conformation; sequence KDWSDLEEEAANADKRREVEE. Residues 998–1014 show a composition bias toward basic and acidic residues; the sequence is NADKRREVEEPSRDRDR. Positions 1015–1030 are enriched in basic residues; it reads KRPHSSKSGPSHKRRK.

It belongs to the peptidase M24 family. SPT16 subfamily. As to quaternary structure, component of the FACT complex, a stable heterodimer of spt-16 and hmg-3 or hmg-4. Expressed in the germline and somatic cells.

The protein resides in the nucleus. It is found in the chromosome. In terms of biological role, component of the FACT complex, a general chromatin factor that acts to reorganize nucleosomes. The FACT complex is involved in multiple processes that require DNA as a template such as mRNA elongation, DNA replication and DNA repair. During transcription elongation the FACT complex acts as a histone chaperone that both destabilizes and restores nucleosomal structure. It facilitates the passage of RNA polymerase II and transcription by promoting the dissociation of one histone H2A-H2B dimer from the nucleosome, then subsequently promotes the reestablishment of the nucleosome following the passage of RNA polymerase II. In embryos, promotes cell cycle progression and chromosomal segregation. Plays a role in the development of the anterior pharynx during embryonic development. The polypeptide is FACT complex subunit spt-16 (Caenorhabditis elegans).